The chain runs to 494 residues: ATP synthase subunit beta, chloroplastic (494 aa).

172–179 provides a ligand contact to ATP; sequence GGAGVGKT.

It belongs to the ATPase alpha/beta chains family. In terms of assembly, F-type ATPases have 2 components, CF(1) - the catalytic core - and CF(0) - the membrane proton channel. CF(1) has five subunits: alpha(3), beta(3), gamma(1), delta(1), epsilon(1). CF(0) has four main subunits: a(1), b(1), b'(1) and c(9-12).

Its subcellular location is the plastid. The protein resides in the chloroplast thylakoid membrane. It catalyses the reaction ATP + H2O + 4 H(+)(in) = ADP + phosphate + 5 H(+)(out). Functionally, produces ATP from ADP in the presence of a proton gradient across the membrane. The catalytic sites are hosted primarily by the beta subunits. The protein is ATP synthase subunit beta, chloroplastic of Physcomitrium patens (Spreading-leaved earth moss).